The following is an 80-amino-acid chain: Centromere protein X (80 aa).

It belongs to the CENP-X/MHF2 family. Heterodimer with CENPX, sometimes called MHF; this interaction stabilizes both partners. MHF heterodimers can assemble to form tetrameric structures. MHF also coassemble with CENPT-CENPW heterodimers at centromeres to form the tetrameric CENP-T-W-S-X complex. Forms a discrete complex with FANCM and CENPX, called FANCM-MHF; this interaction, probably mediated by direct binding between CENPS and FANCM, leads to synergistic activation of double-stranded DNA binding and strongly stimulates FANCM-mediated DNA remodeling. Recruited by FANCM to the Fanconi anemia (FA) core complex, which consists of CENPS, CENPX, FANCA, FANCB, FANCC, FANCE, FANCF, FANCG, FANCL, FANCM, FAAP24 and FAAP100. The FA core complex associates with Bloom syndrome (BLM) complex, which consists of at least BLM, DNA topoisomerase 3-alpha (TOP3A), RMI1/BLAP75, RPA1/RPA70 and RPA2/RPA32. The super complex between FA and BLM is called BRAFT.

Its subcellular location is the nucleus. The protein resides in the chromosome. The protein localises to the centromere. It localises to the kinetochore. Its function is as follows. DNA-binding component of the Fanconi anemia (FA) core complex. Required for the normal activation of the FA pathway, leading to monoubiquitination of the FANCI-FANCD2 complex in response to DNA damage, cellular resistance to DNA cross-linking drugs, and prevention of chromosomal breakage. In complex with CENPS (MHF heterodimer), crucial cofactor for FANCM in both binding and ATP-dependent remodeling of DNA. Stabilizes FANCM. In complex with CENPS and FANCM (but not other FANC proteins), rapidly recruited to blocked forks and promotes gene conversion at blocked replication forks. In complex with CENPS, CENPT and CENPW (CENP-T-W-S-X heterotetramer), involved in the formation of a functional kinetochore outer plate, which is essential for kinetochore-microtubule attachment and faithful mitotic progression. As a component of MHF and CENP-T-W-S-X complexes, binds DNA and bends it to form a nucleosome-like structure. DNA-binding function is fulfilled in the presence of CENPS, with the following preference for DNA substates: Holliday junction &gt; double-stranded &gt; splay arm &gt; single-stranded. Does not bind DNA on its own. The polypeptide is Centromere protein X (CENPX) (Gallus gallus (Chicken)).